We begin with the raw amino-acid sequence, 182 residues long: Ribosomal RNA small subunit methyltransferase G (182 aa).

Residues Gly-58, Phe-63, 109-110, and Arg-123 each bind S-adenosyl-L-methionine; that span reads IE.

The protein belongs to the methyltransferase superfamily. RNA methyltransferase RsmG family.

It is found in the cytoplasm. The catalysed reaction is guanosine(527) in 16S rRNA + S-adenosyl-L-methionine = N(7)-methylguanosine(527) in 16S rRNA + S-adenosyl-L-homocysteine. Functionally, specifically methylates the N7 position of guanine in position 527 of 16S rRNA. This is Ribosomal RNA small subunit methyltransferase G from Campylobacter fetus subsp. fetus (strain 82-40).